The sequence spans 148 residues: Protein ORM1 (148 aa).

Transmembrane regions (helical) follow at residues 12 to 32 (WIIH…FPGV), 36 to 56 (WSWT…FHLI), 89 to 109 (FLII…HYDL), and 111 to 131 (MFSW…LPVT).

The protein to yeast YLR350W C-terminus.

Its subcellular location is the membrane. The polypeptide is Protein ORM1 (ORM1) (Saccharomyces pastorianus (strain ATCC 76670 / Carlsberg bottom yeast no.2 / CBS 1503 / CLIB 180 / NBRC 10610 / NRRL Y-1525) (Saaz-type lager yeast)).